We begin with the raw amino-acid sequence, 83 residues long: Pigment-dispersing hormone peptides (83 aa).

An N-terminal signal peptide occupies residues 1–24 (MRFIILGVLFIAVASMILSNGVMA). Ala-80 is subject to Alanine amide.

Belongs to the arthropod PDH family. As to expression, strongly expressed in eyestalk tissue and cerebral ganglia (at protein level).

It is found in the secreted. The pigment-dispersing hormone causes the migration of the distal retinal pigment into the proximal end of the pigment chromatophore cells and thus decreases the amount of light entering the retinulas. May also function as a neurotransmitter and/or neuromodulator. The chain is Pigment-dispersing hormone peptides from Eurydice pulchra (Speckled sea louse).